The primary structure comprises 22 residues: 65 kDa membrane protein (22 aa).

Residues 1–22 are disordered; the sequence is AAKPLDKSSSSLHHGYSKVHVP.

It localises to the cell membrane. Functionally, binds various plasma and ECM-proteins. The sequence is that of 65 kDa membrane protein from Staphylococcus aureus.